The following is a 368-amino-acid chain: 2-oxoglutarate-dependent dioxygenase frbJ (368 aa).

The region spanning 171–277 is the Fe2OG dioxygenase domain; it reads QQHKLKIVKY…RYSIPFFQGV (107 aa). Fe cation-binding residues include histidine 198, aspartate 200, and histidine 256. Arginine 268 contributes to the 2-oxoglutarate binding site.

Belongs to the iron/ascorbate-dependent oxidoreductase family.

It functions in the pathway antifungal biosynthesis. Its function is as follows. 2-oxoglutarate-dependent dioxygenase; part of the gene cluster that mediates the biosynthesis of the antifungal antibiotic FR901469, an inhibitor of beta-1,3-glucansynthase, exerting antifungal activity against the pathogenes Candida albicans and Aspergillus fumigatus. FR901469 is a cyclic depsipeptide containing 12 amino acid residues and a fatty acid chain. The NRPS frbI contains 12 modules responsible for the formation of the depsipeptide backbone which is denoted as Acyl-Thr-Ala-Tyr-Val-4OHPro-Thr-Thr-3OHPro-threo3OHGln-Gly-Thr-Orn-OH (C71H116N14O23). The PKS frbB is probably involved in the production of the hydrocarbon chain, and the acyl-CoA ligase frbC might be involved in the transport of the chain to the peptide ptoduct of frbI. Because FR901469 contains 3 hydroxylated amino acid residues, the 3 oxygenases frbA, frbH, and frbJ might be participating in amino acid hydroxylation. As no thioesterase domains were detected in frbI or frbB, the thioesterases frbD and frbE may instead release and cyclize the products of the NRPS and PKS, respectively. The chain is 2-oxoglutarate-dependent dioxygenase frbJ from Dothideomycetidae sp. (strain 11243) (Fungal sp. (strain No.11243)).